The chain runs to 214 residues: ATP-dependent Clp protease proteolytic subunit 3 (214 aa).

Residue Ser106 is the Nucleophile of the active site. Residue His131 is part of the active site.

Belongs to the peptidase S14 family. As to quaternary structure, fourteen ClpP subunits assemble into 2 heptameric rings which stack back to back to give a disk-like structure with a central cavity, resembling the structure of eukaryotic proteasomes.

The protein localises to the cytoplasm. It carries out the reaction Hydrolysis of proteins to small peptides in the presence of ATP and magnesium. alpha-casein is the usual test substrate. In the absence of ATP, only oligopeptides shorter than five residues are hydrolyzed (such as succinyl-Leu-Tyr-|-NHMec, and Leu-Tyr-Leu-|-Tyr-Trp, in which cleavage of the -Tyr-|-Leu- and -Tyr-|-Trp bonds also occurs).. Functionally, cleaves peptides in various proteins in a process that requires ATP hydrolysis. Has a chymotrypsin-like activity. Plays a major role in the degradation of misfolded proteins. The polypeptide is ATP-dependent Clp protease proteolytic subunit 3 (Trichormus variabilis (strain ATCC 29413 / PCC 7937) (Anabaena variabilis)).